The following is a 197-amino-acid chain: Probable proteasome subunit beta type-4 (197 aa).

This sequence belongs to the peptidase T1B family. The 26S proteasome consists of a 20S proteasome core and two 19S regulatory subunits. The 20S proteasome core is composed of 28 subunits that are arranged in four stacked rings, resulting in a barrel-shaped structure. The two end rings are each formed by seven alpha subunits, and the two central rings are each formed by seven beta subunits. The catalytic chamber with the active sites is on the inside of the barrel.

The protein resides in the cytoplasm. The protein localises to the nucleus. Functionally, non-catalytic component of the proteasome which degrades poly-ubiquitinated proteins in the cytoplasm and in the nucleus. It is essential for the regulated turnover of proteins and for the removal of misfolded proteins. The proteasome is a multicatalytic proteinase complex that is characterized by its ability to cleave peptides with Arg, Phe, Tyr, Leu, and Glu adjacent to the leaving group at neutral or slightly basic pH. It has an ATP-dependent proteolytic activity. In Encephalitozoon cuniculi (strain GB-M1) (Microsporidian parasite), this protein is Probable proteasome subunit beta type-4 (PRE1).